The chain runs to 343 residues: Heat-inducible transcription repressor HrcA (343 aa).

This sequence belongs to the HrcA family.

Its function is as follows. Negative regulator of class I heat shock genes (grpE-dnaK-dnaJ and groELS operons). Prevents heat-shock induction of these operons. This Thermobifida fusca (strain YX) protein is Heat-inducible transcription repressor HrcA.